We begin with the raw amino-acid sequence, 300 residues long: PTB domain-containing engulfment adapter protein 1 (300 aa).

Residues 21 to 176 form the PID domain; it reads AKHFIPYNAK…GGLQKRIQDL (156 aa). Residues 160 to 199 adopt a coiled-coil conformation; it reads VETRKQIGGLQKRIQDLETENVELKKQLQVLEEQLMIAQV.

The protein belongs to the ced-6 family.

Its subcellular location is the cytoplasm. Its function is as follows. May function as an adapter protein. Required for efficient phagocytosis of apoptotic cells. May play a role in the internalization and endosomal trafficking of various lrp1 ligands. The chain is PTB domain-containing engulfment adapter protein 1 (gulp1) from Danio rerio (Zebrafish).